A 1173-amino-acid chain; its full sequence is Calcium-transporting ATPase 2 (1173 aa).

The disordered stretch occupies residues 1 to 24 (MSRQDENSALLANNENNKPSYTGN). The Cytoplasmic portion of the chain corresponds to 1–114 (MSRQDENSAL…LQLVWAAFND (114 aa)). Residues 7–17 (NSALLANNENN) are compositionally biased toward low complexity. A helical membrane pass occupies residues 115–139 (KTMQLLTVAAVVSFVLGLYELWMQP). The Vacuolar portion of the chain corresponds to 140–152 (PQYDPEGNKIKQV). Residues 153–173 (DWIEGVAIMIAVFVVVLVSAA) traverse the membrane as a helical segment. Residues 174-349 (NDYQKELQFA…LADNISVYGC (176 aa)) are Cytoplasmic-facing. The helical transmembrane segment at 350 to 368 (VSAIILFLVLFTRYLFYII) threads the bilayer. At 369–388 (PEDGRFHDLDPAQKGSKFMN) the chain is on the vacuolar side. A helical transmembrane segment spans residues 389 to 409 (IFITSITVIVVAVPEGLPLAV). The Ca(2+) site is built by Val-398 and Glu-403. Residues 410-899 (TLALAFATTR…RCVSVSIKKF (490 aa)) lie on the Cytoplasmic side of the membrane. Asp-445 serves as the catalytic 4-aspartylphosphate intermediate. 2 residues coordinate Mg(2+): Asp-445 and Thr-447. ATP-binding positions include Thr-447, Lys-643, 762 to 764 (TGD), Arg-816, and Lys-822. Residue Asp-841 participates in Mg(2+) binding. Asn-844 is an ATP binding site. A helical membrane pass occupies residues 900 to 922 (IQFQLIVNITAVILTFVSSVASS). Asn-907 contacts Ca(2+). Topologically, residues 923–929 (DETSVLT) are vacuolar. Residues 930-950 (AVQLLWINLIMDTLAALALAT) form a helical membrane-spanning segment. The Ca(2+) site is built by Asn-937 and Asp-941. Topologically, residues 951-976 (DKPDPNIMDRKPRGRSTSLISVSTWK) are cytoplasmic. A helical membrane pass occupies residues 977-998 (MILSQATLQLIVTFILHFYGPE). The Vacuolar segment spans residues 999–1010 (LFFKKHEDEITS). A helical transmembrane segment spans residues 1011–1029 (HQQQQLNAMTFNTFVWLQF). The Cytoplasmic segment spans residues 1030-1065 (FTMLVSRKLDEGDGISNWRGRISAANLNFFQDLGRN). Residues 1066-1086 (YYFLTIMAIIGSCQVLIMFFG) traverse the membrane as a helical segment. At 1087-1099 (GAPFSIARQTKSM) the chain is on the vacuolar side. The chain crosses the membrane as a helical span at residues 1100-1120 (WITAVLCGMLSLIMGVLVRIC). The Cytoplasmic portion of the chain corresponds to 1121–1173 (PDEVAVKVFPAAFVQRFKYVFGLEFLRKNHTGKHDDEEALLEESDSPESTAFY).

Belongs to the cation transport ATPase (P-type) (TC 3.A.3) family.

Its subcellular location is the vacuole membrane. The enzyme catalyses Ca(2+)(in) + ATP + H2O = Ca(2+)(out) + ADP + phosphate + H(+). In terms of biological role, this magnesium-dependent enzyme catalyzes the hydrolysis of ATP coupled with the transport of calcium. Transports the calcium to the vacuole and participates in the control of the cytosolic free calcium. In Saccharomyces cerevisiae (strain ATCC 204508 / S288c) (Baker's yeast), this protein is Calcium-transporting ATPase 2 (PMC1).